A 435-amino-acid polypeptide reads, in one-letter code: Kynurenine--oxoglutarate transaminase (435 aa).

Substrate-binding residues include Gly-46 and Asn-198. At Lys-262 the chain carries N6-(pyridoxal phosphate)lysine. Arg-413 serves as a coordination point for substrate.

The protein belongs to the class-I pyridoxal-phosphate-dependent aminotransferase family. Homodimer. It depends on pyridoxal 5'-phosphate as a cofactor.

Its subcellular location is the cytoplasm. The enzyme catalyses L-kynurenine + 2-oxoglutarate = kynurenate + L-glutamate + H2O. It carries out the reaction 3-phenylpyruvate + L-glutamine = 2-oxoglutaramate + L-phenylalanine. The catalysed reaction is an S-substituted L-cysteine + H2O = a thiol + pyruvate + NH4(+). Its pathway is amino-acid degradation; L-kynurenine degradation; kynurenate from L-kynurenine: step 1/2. Functionally, catalyzes the irreversible transamination of the L-tryptophan metabolite L-kynurenine to form kynurenic acid (KA). Metabolizes the cysteine conjugates of certain halogenated alkenes and alkanes to form reactive metabolites. Catalyzes the beta-elimination of S-conjugates and Se-conjugates of L-(seleno)cysteine, resulting in the cleavage of the C-S or C-Se bond. The protein is Kynurenine--oxoglutarate transaminase (ccbl) of Dictyostelium discoideum (Social amoeba).